We begin with the raw amino-acid sequence, 58 residues long: Photosystem II reaction center protein K (58 aa).

Residues 1-21 constitute a propeptide that is removed on maturation; sequence MLAIFNIYLDNAFHLNGIILA. The helical transmembrane segment at 29-49 threads the bilayer; it reads IFDPIVDVMPIIPVFFFLLAF.

Belongs to the PsbK family. In terms of assembly, PSII is composed of 1 copy each of membrane proteins PsbA, PsbB, PsbC, PsbD, PsbE, PsbF, PsbH, PsbI, PsbJ, PsbK, PsbL, PsbM, PsbT, PsbX, PsbY, PsbZ, Psb30/Ycf12, at least 3 peripheral proteins of the oxygen-evolving complex and a large number of cofactors. It forms dimeric complexes.

The protein localises to the plastid. It is found in the chloroplast thylakoid membrane. Functionally, one of the components of the core complex of photosystem II (PSII). PSII is a light-driven water:plastoquinone oxidoreductase that uses light energy to abstract electrons from H(2)O, generating O(2) and a proton gradient subsequently used for ATP formation. It consists of a core antenna complex that captures photons, and an electron transfer chain that converts photonic excitation into a charge separation. The polypeptide is Photosystem II reaction center protein K (Physcomitrium patens (Spreading-leaved earth moss)).